The sequence spans 106 residues: MDNTDRRRRRKQHKIALHDSEEVSSIEWEFINMTEQEEDLIFRMYRLVGDRWDLIAGRVPGRQPEEIERYWIMRNSEGFADKRRQLHSSSHKHTKPHRPRFSIYPS.

One can recognise a Myb-like domain in the interval 34-71 (TEQEEDLIFRMYRLVGDRWDLIAGRVPGRQPEEIERYW). Positions 83-106 (RRQLHSSSHKHTKPHRPRFSIYPS) are disordered. Residues 84-100 (RQLHSSSHKHTKPHRPR) show a composition bias toward basic residues.

As to quaternary structure, interacts with GL3 and thus prevents GL1 GL3 interaction. Also interacts with BHLH2. In terms of tissue distribution, expressed in roots, leaves, siliques and inflorescences.

It is found in the nucleus. Functionally, transcription factor. Involved in epidermal cell fate specification. Negative regulator of trichome development, including endoreplication, by lateral inhibition involving intercellular interactions. Promotes the formation of hair developing cells (trichoblasts) in H position in root epidermis, probably by inhibiting non-hair cell (atrichoblasts) formation. The polypeptide is Transcription factor TRY (TRY) (Arabidopsis thaliana (Mouse-ear cress)).